Here is a 120-residue protein sequence, read N- to C-terminus: uncharacterized protein (120 aa).

Residues C70 to K109 form an RING-type zinc finger.

This is an uncharacterized protein from Orgyia pseudotsugata multicapsid polyhedrosis virus (OpMNPV).